Consider the following 309-residue polypeptide: Branched-chain-amino-acid aminotransferase (309 aa).

N6-(pyridoxal phosphate)lysine is present on Lys160.

It belongs to the class-IV pyridoxal-phosphate-dependent aminotransferase family. Homohexamer. The cofactor is pyridoxal 5'-phosphate.

The catalysed reaction is L-leucine + 2-oxoglutarate = 4-methyl-2-oxopentanoate + L-glutamate. It catalyses the reaction L-isoleucine + 2-oxoglutarate = (S)-3-methyl-2-oxopentanoate + L-glutamate. It carries out the reaction L-valine + 2-oxoglutarate = 3-methyl-2-oxobutanoate + L-glutamate. It functions in the pathway amino-acid biosynthesis; L-isoleucine biosynthesis; L-isoleucine from 2-oxobutanoate: step 4/4. Its pathway is amino-acid biosynthesis; L-leucine biosynthesis; L-leucine from 3-methyl-2-oxobutanoate: step 4/4. The protein operates within amino-acid biosynthesis; L-valine biosynthesis; L-valine from pyruvate: step 4/4. Functionally, acts on leucine, isoleucine and valine. This is Branched-chain-amino-acid aminotransferase (ilvE) from Escherichia coli O157:H7.